The primary structure comprises 412 residues: Putative oxidoreductase bli-4, mitochondrial (412 aa).

The transit peptide at 1–55 (MSTKLCQRIARTATLSPTSLVPRSSRLIPIVSSAAVRPSSAIPTRRPFSTTESRY) directs the protein to the mitochondrion. NADP(+) contacts are provided by I108, N120, N186, Y269, K273, V308, T310, and Q312. Catalysis depends on Y269, which acts as the Proton donor. The active-site Lowers pKa of active site Tyr is K273.

This sequence belongs to the short-chain dehydrogenases/reductases (SDR) family.

The protein resides in the mitochondrion. Functionally, may play a role as an NAD-dependent dehydrogenase in the mitochondria. This Neurospora crassa (strain ATCC 24698 / 74-OR23-1A / CBS 708.71 / DSM 1257 / FGSC 987) protein is Putative oxidoreductase bli-4, mitochondrial (bli-4).